The chain runs to 195 residues: HTH-type transcriptional regulator BetI (195 aa).

The region spanning 8 to 68 is the HTH tetR-type domain; the sequence is SIRRRQLIDA…ATMRDITSQL (61 aa). Residues 31-50 constitute a DNA-binding region (H-T-H motif); sequence TIAQIARRAGVSTGIISHYF.

The protein operates within amine and polyamine biosynthesis; betaine biosynthesis via choline pathway [regulation]. In terms of biological role, repressor involved in the biosynthesis of the osmoprotectant glycine betaine. It represses transcription of the choline transporter BetT and the genes of BetAB involved in the synthesis of glycine betaine. The sequence is that of HTH-type transcriptional regulator BetI from Escherichia coli O127:H6 (strain E2348/69 / EPEC).